We begin with the raw amino-acid sequence, 415 residues long: Serine hydroxymethyltransferase 1 (415 aa).

(6S)-5,6,7,8-tetrahydrofolate-binding positions include leucine 117 and 121–123 (GHL). Lysine 225 carries the N6-(pyridoxal phosphate)lysine modification. Residue 349–351 (SPF) participates in (6S)-5,6,7,8-tetrahydrofolate binding.

This sequence belongs to the SHMT family. In terms of assembly, homodimer. Requires pyridoxal 5'-phosphate as cofactor.

The protein localises to the cytoplasm. It carries out the reaction (6R)-5,10-methylene-5,6,7,8-tetrahydrofolate + glycine + H2O = (6S)-5,6,7,8-tetrahydrofolate + L-serine. It functions in the pathway one-carbon metabolism; tetrahydrofolate interconversion. The protein operates within amino-acid biosynthesis; glycine biosynthesis; glycine from L-serine: step 1/1. In terms of biological role, catalyzes the reversible interconversion of serine and glycine with tetrahydrofolate (THF) serving as the one-carbon carrier. This reaction serves as the major source of one-carbon groups required for the biosynthesis of purines, thymidylate, methionine, and other important biomolecules. Also exhibits THF-independent aldolase activity toward beta-hydroxyamino acids, producing glycine and aldehydes, via a retro-aldol mechanism. The protein is Serine hydroxymethyltransferase 1 of Sulfurimonas denitrificans (strain ATCC 33889 / DSM 1251) (Thiomicrospira denitrificans (strain ATCC 33889 / DSM 1251)).